The following is a 456-amino-acid chain: GTPase Der (456 aa).

EngA-type G domains follow at residues Pro4–Glu169 and Ile178–Arg353. Residues Gly10–Ser17, Asp57–Leu61, Asn120–Glu123, Gly184–Ser191, Asp231–Ile235, and Asn296–Asp299 each bind GTP. Residues Arg354 to Gln439 enclose the KH-like domain.

Belongs to the TRAFAC class TrmE-Era-EngA-EngB-Septin-like GTPase superfamily. EngA (Der) GTPase family. In terms of assembly, associates with the 50S ribosomal subunit.

Functionally, GTPase that plays an essential role in the late steps of ribosome biogenesis. The sequence is that of GTPase Der from Prochlorococcus marinus (strain MIT 9211).